The chain runs to 163 residues: MRSQDPSRRLSRRLWTLFALALCLVTGTVALAQTVPQLSGRPSPMQNTGADPLPRWIVDDIQKMRNYPDQPPVIPHSIEGYQLSVNTNRCMSCHRRELTEGSGAPMISVTHYMNREGQMLADVSPRRYFCTACHVPQADTRPLVDNTFKDMSELGFKPAGSGQ.

Positions 1 to 32 (MRSQDPSRRLSRRLWTLFALALCLVTGTVALA) are cleaved as a signal peptide. Residues histidine 76, cysteine 90, cysteine 93, histidine 94, histidine 111, cysteine 130, cysteine 133, and histidine 134 each coordinate heme c.

This sequence belongs to the NapB family. Component of the periplasmic nitrate reductase NapAB complex composed of NapA and NapB. In terms of processing, binds 2 heme C groups per subunit.

It is found in the periplasm. In terms of biological role, electron transfer subunit of the periplasmic nitrate reductase complex NapAB. Receives electrons from the membrane-anchored tetraheme c-type NapC protein and transfers these to NapA subunit, thus allowing electron flow between membrane and periplasm. Essential for periplasmic nitrate reduction with nitrate as the terminal electron acceptor. This Neorhizobium galegae (Rhizobium galegae) protein is Periplasmic nitrate reductase, electron transfer subunit.